A 394-amino-acid polypeptide reads, in one-letter code: uncharacterized protein (394 aa).

Serine 117 and serine 121 each carry phosphoserine. Disordered regions lie at residues 177–295, 315–347, and 370–394; these read DSDE…PGTF, KRSIMLPQDIDPTFPDSEPEDDGHASSTVGSLS, and SSEVLRNSKSPPLDIARKAVGAHRV. Positions 178–190 are enriched in acidic residues; sequence SDEEDEVDDEEIE. Composition is skewed to polar residues over residues 191–207 and 216–230; these read SFNSFSRKMQTISNSRY and EKQSCSSESDRVSQI. Acidic residues-rich tracts occupy residues 231–263 and 284–295; these read SDDEEDEEGSADEEDEEDSDVELSESSLSDDED and IPDDTDFVPGTF. The span at 370–379 shows a compositional bias: polar residues; sequence SSEVLRNSKS. Serine 379 is modified (phosphoserine).

It localises to the nucleus. This is an uncharacterized protein from Schizosaccharomyces pombe (strain 972 / ATCC 24843) (Fission yeast).